We begin with the raw amino-acid sequence, 220 residues long: Cysteine-rich venom protein VAR5 (220 aa).

An N-terminal signal peptide occupies residues 1 to 22; that stretch reads MILLKLYLTLAAILCQSRGTTS. One can recognise an SCP domain in the interval 41–169; the sequence is NKHNDLRRTV…PLKYFLVCQY (129 aa). Cystine bridges form between cysteine 77–cysteine 156, cysteine 95–cysteine 170, cysteine 151–cysteine 167, cysteine 189–cysteine 196, and cysteine 192–cysteine 201. Positions 205-220 constitute a ShKT domain; that stretch reads CEHSNQYINCPDLTKQ.

It belongs to the CRISP family. In terms of processing, contains 8 disulfide bonds. In terms of tissue distribution, expressed by the venom gland.

The protein localises to the secreted. Blocks ryanodine receptors, and potassium channels. This is Cysteine-rich venom protein VAR5 from Varanus acanthurus (Ridge-tailed monitor).